Here is a 463-residue protein sequence, read N- to C-terminus: L-seryl-tRNA(Sec) selenium transferase (463 aa).

Residue lysine 295 is modified to N6-(pyridoxal phosphate)lysine.

This sequence belongs to the SelA family. Homodecamer; pentamer of dimers. Binds only one seryl-tRNA(Sec) per dimer. It depends on pyridoxal 5'-phosphate as a cofactor.

It localises to the cytoplasm. The enzyme catalyses L-seryl-tRNA(Sec) + selenophosphate + H(+) = L-selenocysteinyl-tRNA(Sec) + phosphate. It functions in the pathway aminoacyl-tRNA biosynthesis; selenocysteinyl-tRNA(Sec) biosynthesis; selenocysteinyl-tRNA(Sec) from L-seryl-tRNA(Sec) (bacterial route): step 1/1. In terms of biological role, converts seryl-tRNA(Sec) to selenocysteinyl-tRNA(Sec) required for selenoprotein biosynthesis. The protein is L-seryl-tRNA(Sec) selenium transferase of Escherichia coli (strain SMS-3-5 / SECEC).